We begin with the raw amino-acid sequence, 185 residues long: Ribosome-recycling factor (185 aa).

The protein belongs to the RRF family.

The protein resides in the cytoplasm. In terms of biological role, responsible for the release of ribosomes from messenger RNA at the termination of protein biosynthesis. May increase the efficiency of translation by recycling ribosomes from one round of translation to another. The protein is Ribosome-recycling factor of Streptococcus agalactiae serotype V (strain ATCC BAA-611 / 2603 V/R).